We begin with the raw amino-acid sequence, 104 residues long: Membrane magnesium transporter (104 aa).

Residues 1–2 (MN) lie on the Cytoplasmic side of the membrane. Residues 3-23 (LGFLVGVFGVLILSHAAYSTI) traverse the membrane as a helical segment. The Lumenal portion of the chain corresponds to 24-40 (QYRGLLKIMEEEFSRPP). The helical transmembrane segment at 41–61 (INVILELIIGLALCMWAALTF) threads the bilayer. Over 62–104 (PGKFLSIHPDSDENRAVFLPDNSDFMIFNHRGRLFPPQIDMKF) the chain is Cytoplasmic.

It belongs to the membrane magnesium transporter (TC 1.A.67) family. Component of the ER membrane protein complex (EMC).

The protein resides in the endoplasmic reticulum membrane. It localises to the golgi apparatus membrane. The protein localises to the early endosome membrane. Functionally, mediates Mg(2+) transport. The polypeptide is Membrane magnesium transporter (Arabidopsis thaliana (Mouse-ear cress)).